Reading from the N-terminus, the 496-residue chain is Angiopoietin-2 (496 aa).

The N-terminal stretch at 1–18 is a signal peptide; the sequence is MWQIVFLTFGCDLVLASA. Asn89, Asn119, Asn133, Asn151, Asn240, and Asn304 each carry an N-linked (GlcNAc...) asparagine glycan. Positions 159-256 form a coiled coil; the sequence is QLLQHSISTN…QQHDLMETVN (98 aa). The Fibrinogen C-terminal domain occupies 280–496; the sequence is TFRDCAEIFK…TTMMIRPADF (217 aa). An intrachain disulfide couples Cys284 to Cys313. Residues Asp429, Asp431, Cys433, and Cys435 each contribute to the Ca(2+) site. Intrachain disulfides connect Cys433–Cys435 and Cys437–Cys450.

Interacts with TEK/TIE2, competing for the same binding site as ANGPT1. Interacts with ITGA5. Interacts with SVEP1/polydom. Interacts with THBD; this interaction significantly inhibits the generation of activated PC and TAFIa/CPB2 by the thrombin/thrombomodulin complex.

It is found in the secreted. Its function is as follows. Binds to TEK/TIE2, competing for the ANGPT1 binding site, and modulating ANGPT1 signaling. Can induce tyrosine phosphorylation of TEK/TIE2 in the absence of ANGPT1. In the absence of angiogenic inducers, such as VEGF, ANGPT2-mediated loosening of cell-matrix contacts may induce endothelial cell apoptosis with consequent vascular regression. In concert with VEGF, it may facilitate endothelial cell migration and proliferation, thus serving as a permissive angiogenic signal. Involved in the regulation of lymphangiogenesis. The polypeptide is Angiopoietin-2 (Angpt2) (Rattus norvegicus (Rat)).